The following is a 651-amino-acid chain: BTB/POZ domain-containing protein At3g44820 (651 aa).

The BTB domain occupies 25–96; it reads SDITVVVDDV…CYGARVDITS (72 aa). In terms of domain architecture, NPH3 spans 211-509; that stretch reads DWWYEDISYL…LQVLFFEQMH (299 aa). Residues 611–651 are disordered; the sequence is DAKNDTVQNSVSSTPRSATADHTLPRSSRHSKHRKSFSFFG. Positions 615–627 are enriched in polar residues; it reads DTVQNSVSSTPRS. Basic residues predominate over residues 637-651; the sequence is SSRHSKHRKSFSFFG.

The protein belongs to the NPH3 family.

Its pathway is protein modification; protein ubiquitination. In terms of biological role, may act as a substrate-specific adapter of an E3 ubiquitin-protein ligase complex (CUL3-RBX1-BTB) which mediates the ubiquitination and subsequent proteasomal degradation of target proteins. In Arabidopsis thaliana (Mouse-ear cress), this protein is BTB/POZ domain-containing protein At3g44820.